A 1376-amino-acid polypeptide reads, in one-letter code: Ubiquitin carboxyl-terminal hydrolase 47 (1376 aa).

At Lys-122 the chain carries N6-acetyllysine. The region spanning 188-564 is the USP domain; sequence VGLVNQAMTC…NAYMLIYRLK (377 aa). Catalysis depends on Cys-197, which acts as the Nucleophile. Positions 426 to 452 are disordered; that stretch reads EKSPQTESCTDSGAENEGSCHSDQMSN. A compositionally biased stretch (polar residues) spans 430–452; it reads QTESCTDSGAENEGSCHSDQMSN. Catalysis depends on His-503, which acts as the Proton acceptor. Ser-832 is subject to Phosphoserine. 3 disordered regions span residues 835–863, 880–971, and 985–1025; these read SYSK…KGPA, LKSL…SSDT, and GLDS…ESGK. The segment covering 882–900 has biased composition (low complexity); the sequence is SLSLQQQQQDGDNGDSSKS. Ser-911 and Ser-934 each carry phosphoserine. Polar residues predominate over residues 930–939; that stretch reads HIQTSDPENF. The span at 941–951 shows a compositional bias: basic and acidic residues; that stretch reads SEERSDSDVNN. A compositionally biased stretch (low complexity) spans 954-970; the sequence is STSSVDSDILSSSHSSD. Over residues 998-1007 the composition is skewed to basic and acidic residues; sequence KANEGKKETW. A compositionally biased stretch (acidic residues) spans 1008-1021; the sequence is DTAEEDSGTDSEYD. The residue at position 1014 (Ser-1014) is a Phosphoserine. Thr-1016 carries the post-translational modification Phosphothreonine. At Ser-1018 the chain carries Phosphoserine.

The protein belongs to the peptidase C19 family. USP47 subfamily. As to quaternary structure, interacts with BTRC and FBXW11. Interacts with POLB.

It localises to the cytoplasm. The enzyme catalyses Thiol-dependent hydrolysis of ester, thioester, amide, peptide and isopeptide bonds formed by the C-terminal Gly of ubiquitin (a 76-residue protein attached to proteins as an intracellular targeting signal).. Functionally, ubiquitin-specific protease that specifically deubiquitinates monoubiquitinated DNA polymerase beta (POLB), stabilizing POLB thereby playing a role in base-excision repair (BER). Acts as a regulator of cell growth and genome integrity. May also indirectly regulate CDC25A expression at a transcriptional level. This is Ubiquitin carboxyl-terminal hydrolase 47 (Usp47) from Mus musculus (Mouse).